A 337-amino-acid chain; its full sequence is Zinc finger protein 488 (337 aa).

Residues 1-10 are compositionally biased toward polar residues; the sequence is MAAGTSTLLS. Disordered stretches follow at residues 1–32, 55–83, and 146–179; these read MAAG…SVEK, SDTA…PRLD, and SAWP…MLLA. Residues 69 to 184 form an important for transcriptional repression activity region; it reads TELSLPTAPN…PMLLAGGSAE (116 aa). 2 consecutive C2H2-type zinc fingers follow at residues 272–299 and 314–336; these read NWCA…KREH and LTCP…MASH. The Nuclear localization signal signature appears at 295–302; that stretch reads HKREHVGP.

This sequence belongs to the krueppel C2H2-type zinc-finger protein family. Interacts with OLIG2.

The protein resides in the nucleus. Its function is as follows. Transcriptional repressor. Plays a role in oligodendrocyte differentiation, together with OLIG2. Mediates Notch signaling-activated formation of oligodendrocyte precursors. Promotes differentiation of adult neural stem progenitor cells (NSPCs) into mature oligodendrocytes and contributes to remyelination following nerve injury. The chain is Zinc finger protein 488 (Znf488) from Mus musculus (Mouse).